Here is a 338-residue protein sequence, read N- to C-terminus: Homocysteine S-methyltransferase 3 (338 aa).

Positions Ala-12–Leu-326 constitute a Hcy-binding domain. 3 residues coordinate Zn(2+): Cys-244, Cys-311, and Cys-312.

As to quaternary structure, monomer. Requires Zn(2+) as cofactor.

The catalysed reaction is S-methyl-L-methionine + L-homocysteine = 2 L-methionine + H(+). Its function is as follows. Catalyzes methyl transfer from S-methylmethionine (SMM) to adenosyl-L-homocysteine (AdoMet). SMM degradation (by HMT-1, HMT-2, HMT-3 and HMT-4) and biosynthesis (by MMT1) constitute the SMM cycle in plants, which is probably required to achieve short term control of AdoMet level. The protein is Homocysteine S-methyltransferase 3 (HMT-3) of Zea mays (Maize).